The chain runs to 164 residues: Phosphopantetheine adenylyltransferase (164 aa).

Ser10 provides a ligand contact to substrate. Residues Ser10 to Phe11 and His18 contribute to the ATP site. 3 residues coordinate substrate: Lys42, Thr79, and Arg93. ATP contacts are provided by residues Gly94 to Arg96, Glu104, and Val129 to Thr135.

It belongs to the bacterial CoaD family. As to quaternary structure, homohexamer. Requires Mg(2+) as cofactor.

It localises to the cytoplasm. It catalyses the reaction (R)-4'-phosphopantetheine + ATP + H(+) = 3'-dephospho-CoA + diphosphate. The protein operates within cofactor biosynthesis; coenzyme A biosynthesis; CoA from (R)-pantothenate: step 4/5. In terms of biological role, reversibly transfers an adenylyl group from ATP to 4'-phosphopantetheine, yielding dephospho-CoA (dPCoA) and pyrophosphate. In Bradyrhizobium sp. (strain BTAi1 / ATCC BAA-1182), this protein is Phosphopantetheine adenylyltransferase.